The following is a 296-amino-acid chain: NADPH-dependent 1-acyldihydroxyacetone phosphate reductase (296 aa).

I9 contributes to the NADP(+) binding site. A GXSXG motif is present at residues 11–15 (GCSEG). NADP(+)-binding residues include T35, R41, D56, N84, K117, Y148, K152, V181, and T183. Catalysis depends on Y148, which acts as the Proton donor. The Lowers pKa of active site Tyr role is filled by K152.

This sequence belongs to the short-chain dehydrogenases/reductases (SDR) family.

It is found in the lipid droplet. Its subcellular location is the cytoplasm. The protein localises to the vacuole. The protein resides in the endoplasmic reticulum. It localises to the golgi apparatus. It is found in the mitochondrion outer membrane. It catalyses the reaction 1-hexadecanoyl-sn-glycero-3-phosphate + NADP(+) = 1-hexadecanoylglycerone 3-phosphate + NADPH + H(+). The catalysed reaction is a 1-acylglycerone 3-phosphate + NADPH + H(+) = a 1-acyl-sn-glycero-3-phosphate + NADP(+). The enzyme catalyses a triacylglycerol + H2O = a diacylglycerol + a fatty acid + H(+). Its function is as follows. Can convert acyl and alkyl dihydroxyacetone-phosphate (DHAP) into glycerolipids and ether lipids, respectively. Required for the biosynthesis of phosphatidic acid via the DHAP pathway, where it reduces 1-acyl DHAP to lysophosphatidic acid (LPA). Also has triacylglycerol (TAG) lipase activity. Involved in the mobilization of the non-polar storage lipids triacylglycerols (TAGs) from lipid particles by hydrolysis of TAGs. Lipolysis of TAG by AYR1 is essential for starvation-induced autophagy. Forms an NADPH-regulated cation-selective channel in the mitochondrial outer membrane. The chain is NADPH-dependent 1-acyldihydroxyacetone phosphate reductase (ayr1) from Schizosaccharomyces pombe (strain 972 / ATCC 24843) (Fission yeast).